The primary structure comprises 252 residues: 2-C-methyl-D-erythritol 4-phosphate cytidylyltransferase (252 aa).

It belongs to the IspD/TarI cytidylyltransferase family. IspD subfamily.

It catalyses the reaction 2-C-methyl-D-erythritol 4-phosphate + CTP + H(+) = 4-CDP-2-C-methyl-D-erythritol + diphosphate. It participates in isoprenoid biosynthesis; isopentenyl diphosphate biosynthesis via DXP pathway; isopentenyl diphosphate from 1-deoxy-D-xylulose 5-phosphate: step 2/6. Catalyzes the formation of 4-diphosphocytidyl-2-C-methyl-D-erythritol from CTP and 2-C-methyl-D-erythritol 4-phosphate (MEP). The polypeptide is 2-C-methyl-D-erythritol 4-phosphate cytidylyltransferase (Chlorobium phaeobacteroides (strain BS1)).